Reading from the N-terminus, the 265-residue chain is Cytochrome c oxidase subunit 3 (265 aa).

Transmembrane regions (helical) follow at residues 16–36 (PWPF…ILWL), 40–60 (PSFL…FSWW), 83–103 (CVAL…WTFF), 159–179 (VGPF…FLVQ), 198–218 (VFYL…IWLM), and 241–261 (IWYW…VYVW).

This sequence belongs to the cytochrome c oxidase subunit 3 family. As to quaternary structure, component of the cytochrome c oxidase (complex IV, CIV), a multisubunit enzyme composed of a catalytic core of 3 subunits and several supernumerary subunits. The complex exists as a monomer or a dimer and forms supercomplexes (SCs) in the inner mitochondrial membrane with ubiquinol-cytochrome c oxidoreductase (cytochrome b-c1 complex, complex III, CIII).

The protein localises to the mitochondrion inner membrane. It catalyses the reaction 4 Fe(II)-[cytochrome c] + O2 + 8 H(+)(in) = 4 Fe(III)-[cytochrome c] + 2 H2O + 4 H(+)(out). Component of the cytochrome c oxidase, the last enzyme in the mitochondrial electron transport chain which drives oxidative phosphorylation. The respiratory chain contains 3 multisubunit complexes succinate dehydrogenase (complex II, CII), ubiquinol-cytochrome c oxidoreductase (cytochrome b-c1 complex, complex III, CIII) and cytochrome c oxidase (complex IV, CIV), that cooperate to transfer electrons derived from NADH and succinate to molecular oxygen, creating an electrochemical gradient over the inner membrane that drives transmembrane transport and the ATP synthase. Cytochrome c oxidase is the component of the respiratory chain that catalyzes the reduction of oxygen to water. Electrons originating from reduced cytochrome c in the intermembrane space (IMS) are transferred via the dinuclear copper A center (CU(A)) of subunit 2 and heme A of subunit 1 to the active site in subunit 1, a binuclear center (BNC) formed by heme A3 and copper B (CU(B)). The BNC reduces molecular oxygen to 2 water molecules using 4 electrons from cytochrome c in the IMS and 4 protons from the mitochondrial matrix. The protein is Cytochrome c oxidase subunit 3 (COIII) of Mytilus edulis (Blue mussel).